The primary structure comprises 1377 residues: DNA-directed RNA polymerase subunit beta (1377 aa).

Belongs to the RNA polymerase beta chain family. The RNAP catalytic core consists of 2 alpha, 1 beta, 1 beta' and 1 omega subunit. When a sigma factor is associated with the core the holoenzyme is formed, which can initiate transcription.

The enzyme catalyses RNA(n) + a ribonucleoside 5'-triphosphate = RNA(n+1) + diphosphate. Functionally, DNA-dependent RNA polymerase catalyzes the transcription of DNA into RNA using the four ribonucleoside triphosphates as substrates. This is DNA-directed RNA polymerase subunit beta from Brucella canis (strain ATCC 23365 / NCTC 10854 / RM-666).